The chain runs to 518 residues: Probable lysine--tRNA ligase, cytoplasmic (518 aa).

This sequence belongs to the class-II aminoacyl-tRNA synthetase family. Homodimer.

The protein localises to the cytoplasm. It carries out the reaction tRNA(Lys) + L-lysine + ATP = L-lysyl-tRNA(Lys) + AMP + diphosphate. This is Probable lysine--tRNA ligase, cytoplasmic from Enterocytozoon bieneusi (strain H348) (Microsporidian parasite).